Consider the following 1162-residue polypeptide: Enhanced level of genomic instability 1 (1162 aa).

Disordered regions lie at residues 1-136, 144-163, 179-202, 249-319, 348-380, 611-634, and 666-697; these read MTDV…ADNQ, KAGK…KPKP, LGVN…ATPT, KTDA…TKKR, METP…RRSC, RSME…PNGE, and WSGN…SSSN. Positions 65-78 are enriched in basic residues; the sequence is KQKHREKHKRKREE. Positions 79 to 111 are enriched in basic and acidic residues; the sequence is KRRAALMEDQKSTTEEVKANAKEKPQPLREKSS. Residues 125-136 show a composition bias toward polar residues; that stretch reads PLKSSTPVADNQ. The span at 268–278 shows a compositional bias: basic residues; the sequence is KRLRGRPRSRR. 2 stretches are compositionally biased toward low complexity: residues 666-676 and 684-697; these read WSGNGGSNRNS and DMSN…SSSN. 703–710 contributes to the ATP binding site; it reads GPSSSGKT. Disordered stretches follow at residues 900–923 and 975–1008; these read GDST…SRLA and QAAG…SDGH. Basic residues predominate over residues 984–993; sequence AAKRKSRSPK. Residues 998–1008 show a composition bias toward polar residues; the sequence is SSATGQKSDGH.

The protein belongs to the ELG1 family. In terms of assembly, component of a heteropentameric Elg1 RFC-like complex composed of one large subunit (elg1) and four small subunits (RfC4, RfC38, CG8142 and RfC3). As part of the complex, might interact with the Enok complex, composed of enok, Br140, Eaf6 and Ing5. Within the Enok complex, interacts directly with Br140. In terms of tissue distribution, expressed at higher levels in the germline nurse cells than in the somatic follicle cells.

The protein localises to the nucleus. In terms of biological role, has an important role in DNA replication and in maintaining genome integrity during replication stress. Promotes PCNA deubiquitination. As component of the Elg1 RFC-like complex, regulates the functions of the DNA polymerase processivity factor PCNA by unloading it from DNA after replication during the S phase of the cell cycle. The PCNA-unloading might be regulated via interaction with the Enok acetyltransferase complex. Might have a role in restarting of stalled/regressed replication forks during replication stress. In the ovaries, has a role in nurse cell endoreplication. In Drosophila melanogaster (Fruit fly), this protein is Enhanced level of genomic instability 1.